A 405-amino-acid chain; its full sequence is Probable tRNA sulfurtransferase (405 aa).

Residues 60–165 (QEVSASLKKI…PDAAYISHEE (106 aa)) enclose the THUMP domain. ATP contacts are provided by residues 183 to 184 (ML), 208 to 209 (HF), Arg-265, Gly-287, and Gln-296.

It belongs to the ThiI family.

The protein resides in the cytoplasm. The catalysed reaction is [ThiI sulfur-carrier protein]-S-sulfanyl-L-cysteine + a uridine in tRNA + 2 reduced [2Fe-2S]-[ferredoxin] + ATP + H(+) = [ThiI sulfur-carrier protein]-L-cysteine + a 4-thiouridine in tRNA + 2 oxidized [2Fe-2S]-[ferredoxin] + AMP + diphosphate. The enzyme catalyses [ThiS sulfur-carrier protein]-C-terminal Gly-Gly-AMP + S-sulfanyl-L-cysteinyl-[cysteine desulfurase] + AH2 = [ThiS sulfur-carrier protein]-C-terminal-Gly-aminoethanethioate + L-cysteinyl-[cysteine desulfurase] + A + AMP + 2 H(+). Its pathway is cofactor biosynthesis; thiamine diphosphate biosynthesis. Catalyzes the ATP-dependent transfer of a sulfur to tRNA to produce 4-thiouridine in position 8 of tRNAs, which functions as a near-UV photosensor. Also catalyzes the transfer of sulfur to the sulfur carrier protein ThiS, forming ThiS-thiocarboxylate. This is a step in the synthesis of thiazole, in the thiamine biosynthesis pathway. The sulfur is donated as persulfide by IscS. In Streptococcus suis (strain 98HAH33), this protein is Probable tRNA sulfurtransferase.